The chain runs to 513 residues: Light-independent protochlorophyllide reductase subunit B (513 aa).

Asp-36 provides a ligand contact to [4Fe-4S] cluster. Asp-299 functions as the Proton donor in the catalytic mechanism. 434–435 (GM) contributes to the substrate binding site.

Belongs to the ChlB/BchB/BchZ family. As to quaternary structure, protochlorophyllide reductase is composed of three subunits; ChlL, ChlN and ChlB. Forms a heterotetramer of two ChlB and two ChlN subunits. [4Fe-4S] cluster is required as a cofactor.

It localises to the plastid. The protein localises to the chloroplast. The catalysed reaction is chlorophyllide a + oxidized 2[4Fe-4S]-[ferredoxin] + 2 ADP + 2 phosphate = protochlorophyllide a + reduced 2[4Fe-4S]-[ferredoxin] + 2 ATP + 2 H2O. It functions in the pathway porphyrin-containing compound metabolism; chlorophyll biosynthesis (light-independent). Functionally, component of the dark-operative protochlorophyllide reductase (DPOR) that uses Mg-ATP and reduced ferredoxin to reduce ring D of protochlorophyllide (Pchlide) to form chlorophyllide a (Chlide). This reaction is light-independent. The NB-protein (ChlN-ChlB) is the catalytic component of the complex. The polypeptide is Light-independent protochlorophyllide reductase subunit B (Chaetosphaeridium globosum (Charophycean green alga)).